The following is a 301-amino-acid chain: MGAQLSTLSRVVLSPVWFVYSLFMKLFQRSSPAITLENPDIKYPLRLIDKEIISHDTRRFRFALPSPQHILGLPIGQHIYLSTRIDGNLVIRPYTPVSSDDDKGFVDLVVKVYFKDTHPKFPAGGKMSQYLENMNIGDTIEFRGPNGLLVYQGKGKFAIRADKKSNPVVRTVKSVGMIAGGTGITPMLQVIRAVLKDPNDHTVCYLLFANQSEKDILLRPELEELRNEHSSRFKLWYTVDKAPDAWDYSQGFVNEEMIRDHLPPPGEETLILMCGPPPMIQFACLPNLERVGHPKERCFTF.

The N-myristoyl glycine moiety is linked to residue G2. Residues 40–152 enclose the FAD-binding FR-type domain; the sequence is DIKYPLRLID…RGPNGLLVYQ (113 aa). K42 carries the post-translational modification N6-acetyllysine. Y43 carries the post-translational modification Phosphotyrosine. K50 carries the N6-acetyllysine modification. FAD is bound by residues R92, P93, Y94, V109, K111, and F114. K120 bears the N6-acetyllysine mark. FAD contacts are provided by K126, M127, S128, and T185.

Belongs to the flavoprotein pyridine nucleotide cytochrome reductase family. As to quaternary structure, component of a complex composed of cytochrome b5, NADH-cytochrome b5 reductase (CYB5R3) and MTARC2. Interacts with MTLN; the interaction is required to maintain cellular lipid composition and leads to stimulation of mitochondrial respiratory complex I activity. FAD is required as a cofactor. Post-translationally, myristoylated. In terms of tissue distribution, ubiquitously expressed. As to expression, expressed only in erythroid tissues, reticulocytes and liver.

The protein localises to the endoplasmic reticulum membrane. Its subcellular location is the mitochondrion outer membrane. It localises to the cytoplasm. The enzyme catalyses 2 Fe(III)-[cytochrome b5] + NADH = 2 Fe(II)-[cytochrome b5] + NAD(+) + H(+). Its function is as follows. Catalyzes the reduction of two molecules of cytochrome b5 using NADH as the electron donor. The protein is NADH-cytochrome b5 reductase 3 of Rattus norvegicus (Rat).